The sequence spans 511 residues: Cytochrome P450 4A7 (511 aa).

The propeptide occupies 1–4 (MSVS). 2 residues coordinate heme: glutamate 322 and cysteine 458.

Belongs to the cytochrome P450 family. Requires heme as cofactor. In terms of tissue distribution, liver, kidney, small intestine.

Its subcellular location is the endoplasmic reticulum membrane. It localises to the microsome membrane. It catalyses the reaction an omega-methyl-long-chain fatty acid + reduced [NADPH--hemoprotein reductase] + O2 = an omega-hydroxy-long-chain fatty acid + oxidized [NADPH--hemoprotein reductase] + H2O + H(+). Cytochromes P450 are a group of heme-thiolate monooxygenases. In liver microsomes, this enzyme is involved in an NADPH-dependent electron transport pathway. It oxidizes a variety of structurally unrelated compounds, including steroids, fatty acids, and xenobiotics. Functionally, the kidney P-450 system is rather specialized for the omega-hydroxylation of fatty acids. Both P450-KA1 and P450-KA2 catalyze the omega- and (omega-1)-hydroxylation of various fatty acids with no drug-metabolizing activity, and hydroxylate prostaglandin A1 and A2 solely at the omega-position. The polypeptide is Cytochrome P450 4A7 (CYP4A7) (Oryctolagus cuniculus (Rabbit)).